Consider the following 137-residue polypeptide: Small ribosomal subunit protein uS9c (137 aa).

The protein belongs to the universal ribosomal protein uS9 family.

The protein resides in the plastid. Its subcellular location is the chloroplast. This Chlorella vulgaris (Green alga) protein is Small ribosomal subunit protein uS9c (rps9).